Reading from the N-terminus, the 248-residue chain is Putative mutator protein MutT4 (248 aa).

The tract at residues 1–64 (MSDGEQAKSR…GSTRMRTVHE (64 aa)) is disordered. Residues 9–20 (SRRRRGRRRGRR) are compositionally biased toward basic residues. Residues 31–44 (AQPAGDATPTPATA) show a composition bias toward low complexity. Basic residues predominate over residues 45 to 57 (KRSRSRSPRRGST). Positions 62–198 (VHETSAGGLV…DERRLAEVAD (137 aa)) constitute a Nudix hydrolase domain. Mg(2+) contacts are provided by G103, E118, E121, and E122. The short motif at 103 to 124 (GHIELGETAEQTAIREVAEETG) is the Nudix box element. The tract at residues 204 to 248 (LQSDGPAALPPLPPSSPRRRPQTHSRARHADDSAPGQHNGPGPGP) is disordered. Over residues 220 to 230 (PRRRPQTHSRA) the composition is skewed to basic residues.

It belongs to the Nudix hydrolase family. The cofactor is Mg(2+). Mn(2+) serves as cofactor.

In terms of biological role, may be involved in the GO system responsible for removing an oxidatively damaged form of guanine (7,8-dihydro-8-oxoguanine, 8-oxo-dGTP) from DNA and the nucleotide pool. In Mycobacterium tuberculosis (strain CDC 1551 / Oshkosh), this protein is Putative mutator protein MutT4 (mutT4).